The chain runs to 332 residues: Melanocortin receptor 4 (332 aa).

At 1-43 the chain is on the extracellular side; it reads MNSTHHHGMYTSLHLWNRSSYGLHGNASESLGKGHPDGGCYEQ. N-linked (GlcNAc...) asparagine glycans are attached at residues Asn-2, Asn-17, and Asn-26. 2 disulfide bridges follow: Cys-40/Cys-279 and Cys-271/Cys-277. A helical transmembrane segment spans residues 44–69; it reads LFVSPEVFVTLGVISLLENILVIVAI. The Cytoplasmic portion of the chain corresponds to 70–81; that stretch reads AKNKNLHSPMYF. The chain crosses the membrane as a helical span at residues 82–106; sequence FICSLAVADMLVSVSNGSETIVITL. Ca(2+) is bound at residue Glu-100. At 107 to 123 the chain is on the extracellular side; it reads LNSTDTDAQSFTVNIDN. N-linked (GlcNAc...) asparagine glycosylation is present at Asn-108. Asp-122 and Asp-126 together coordinate Ca(2+). The chain crosses the membrane as a helical span at residues 124 to 145; sequence VIDSVICSSLLASICSLLSIAV. Over 146–165 the chain is Cytoplasmic; sequence DRYFTIFYALQYHNIMTVRR. A helical transmembrane segment spans residues 166-186; it reads VGIIISCIWAACTVSGVLFII. Residues 187 to 191 are Extracellular-facing; that stretch reads YSDSS. The helical transmembrane segment at 192–215 threads the bilayer; it reads AVIICLISMFFTMLVLMASLYVHM. The Cytoplasmic portion of the chain corresponds to 216-248; the sequence is FLMARLHIKRIAVLPGTGTIRQGTNMKGAITLT. A helical membrane pass occupies residues 249-271; it reads ILIGVFVVCWAPFFLHLLFYISC. The Extracellular portion of the chain corresponds to 272–280; the sequence is PQNPYCVCF. A helical membrane pass occupies residues 281-304; that stretch reads MSHFNLYLILIMCNAVIDPLIYAL. Residues 305–332 are Cytoplasmic-facing; that stretch reads RSQELRKTFKEIICFYPLGGICELSSRY. Residue Cys-318 is the site of S-palmitoyl cysteine attachment.

It belongs to the G-protein coupled receptor 1 family. In terms of assembly, homodimer; disulfide-linked, also forms higher order oligomers. Interacts with GNAS. Interacts with ATRNL1. Interacts with MGRN1; this interaction competes with GNAS-binding and thus inhibits agonist-induced cAMP production. Interacts with MRAP and MRAP2; these associated factors increase ligand-sensitivity and generation of cAMP.

It localises to the cell membrane. Its function is as follows. Hormone receptor that acts as a key component of the leptin-melanocortin pathway at the intersection of homeostatic maintenance of energetic state. Plays a role in regulating food intake: activation by a stimulating hormone such as anorexigenic alpha-melanocyte stimulating hormone (alpha-MSH) inhibits appetite, whereas binding to a natural antagonist like Agouti-related protein/AGRP promotes appetite. G-protein-coupled receptor that activates conventional Galphas signaling leading to induction of anorexogenic signaling in the hypothalamus to result in negative energy balance. Regulates the firing activity of neurons from the hypothalamus by alpha-MSH and AGRP independently of Galphas signaling by ligand-induced coupling of closure of inwardly rectifying potassium channel KCNJ13. In intestinal epithelial cells, plays a role in the inhibition of hepatic glucose production via nesfatin-1/NUCB2 leading to increased cyclic adenosine monophosphate (cAMP) levels and glucagon-like peptide 1 (GLP-1) secretion in the intestinal epithelium. This chain is Melanocortin receptor 4 (Mc4r), found in Mus musculus (Mouse).